The primary structure comprises 150 residues: Flagellar assembly factor FliW (150 aa).

This sequence belongs to the FliW family. Interacts with translational regulator CsrA and flagellin(s).

The protein resides in the cytoplasm. In terms of biological role, acts as an anti-CsrA protein, binds CsrA and prevents it from repressing translation of its target genes, one of which is flagellin. Binds to flagellin and participates in the assembly of the flagellum. This Leptospira interrogans serogroup Icterohaemorrhagiae serovar copenhageni (strain Fiocruz L1-130) protein is Flagellar assembly factor FliW.